We begin with the raw amino-acid sequence, 311 residues long: Dehydrogenase/reductase SDR family member 7C (311 aa).

An N-terminal signal peptide occupies residues M1 to G18. V41 to V65 is an NAD(+) binding site. T178 is a substrate binding site. Y191 (proton acceptor) is an active-site residue.

It belongs to the short-chain dehydrogenases/reductases (SDR) family.

The protein resides in the secreted. Functionally, putative oxidoreductase. In Xenopus tropicalis (Western clawed frog), this protein is Dehydrogenase/reductase SDR family member 7C (dhrs7c).